The chain runs to 367 residues: ABI gene family member 3 (367 aa).

A coiled-coil region spans residues 36–64 (CEDNYLQATDKRKALEETMAFTTQALASV). A disordered region spans residues 163–273 (LSRTGTLSRK…LEVSQPPLEA (111 aa)). Over residues 206–225 (SAASSASSLASAGSAEGASG) the composition is skewed to low complexity. Residues serine 216 and serine 219 each carry the phosphoserine modification. Over residues 236 to 264 (ATPPPPPVAPVTPPPPPLSAEVFLPPPPL) the composition is skewed to pro residues. Residues 309–367 (SYLEKVVTLYPYTRQKDNELSFSEGTVICVTRRYSDGWCEGVSSEGTGFFPGNYVEPSC) form the SH3 domain. The residue at position 343 (serine 343) is a Phosphoserine.

This sequence belongs to the ABI family. As to quaternary structure, may interact with PAK1 and PAK2. Probably interacts with TARSH.

Its subcellular location is the cytoplasm. Functionally, inhibits ectopic tumor cell metastasis of SRD cells. In vitro, reduces cell motility. This chain is ABI gene family member 3 (Abi3), found in Mus musculus (Mouse).